We begin with the raw amino-acid sequence, 902 residues long: Methionine--tRNA ligase, cytoplasmic (902 aa).

In terms of domain architecture, GST C-terminal spans 74 to 212 (GWEQDDLTNQ…QKQPQPQPPP (139 aa)). The 'HIGH' region motif lies at 275–285 (PYVNNVPHLGN). A 'KMSKS' region motif is present at residues 595–599 (KFSKS). Position 598 (K598) interacts with ATP. At S827 the chain carries Phosphoserine. Phosphothreonine is present on T837. The WHEP-TRS domain maps to 843–899 (HIQTLTDEVTKQGNVVRELKAQKADKNQVAAEVAKLLDLKKQLALAEGKPIETPKGK).

This sequence belongs to the class-I aminoacyl-tRNA synthetase family. Monomer. Part of a multisubunit complex that groups tRNA ligases for Arg (RARS1), Asp (DARS1), Gln (QARS1), Ile (IARS1), Leu (LARS1), Lys (KARS1), Met (MARS1) the bifunctional ligase for Glu and Pro (EPRS1) and the auxiliary subunits AIMP1/p43, AIMP2/p38 and EEF1E1/p18. Forms a linear complex that contains MARS1, EEF1E1, EPRS1 and AIMP2 that is at the core of the multisubunit complex.

Its subcellular location is the cytoplasm. The protein resides in the cytosol. The protein localises to the nucleus. It is found in the nucleolus. The enzyme catalyses tRNA(Met) + L-methionine + ATP = L-methionyl-tRNA(Met) + AMP + diphosphate. Its function is as follows. Catalyzes the specific attachment of an amino acid to its cognate tRNA in a 2 step reaction: the amino acid (AA) is first activated by ATP to form AA-AMP and then transferred to the acceptor end of the tRNA. Plays a role in the synthesis of ribosomal RNA in the nucleolus. This is Methionine--tRNA ligase, cytoplasmic (Mars1) from Mus musculus (Mouse).